The chain runs to 214 residues: Nodulation protein A (214 aa).

This sequence belongs to the NodA family.

The protein resides in the cytoplasm. Functionally, N-acyltransferase required for nodulation. Acts in the production of a small, heat-stable compound (Nod) that stimulates mitosis in various plant protoplasts. The polypeptide is Nodulation protein A (Methylobacterium nodulans (strain LMG 21967 / CNCM I-2342 / ORS 2060)).